The primary structure comprises 150 residues: MSVALSNRFQGGKAFGLLKARQEKRLEEINREFLCDQKYSDEENLPEKLAAFKEKYMEFDLNNEGEIDLMSLKRMMEKLGVPKTHLEMKKMISEVTGGVSDTISYRDFVNMMLGKRSAVLKLVMMFEGKANESSPKPAGPPPERDIASLP.

At S2 the chain carries N-acetylserine. Position 2 is a phosphoserine (S2). An EF-hand 1 domain is found at 47 to 82; that stretch reads EKLAAFKEKYMEFDLNNEGEIDLMSLKRMMEKLGVP. Positions 60, 62, 64, and 66 each coordinate Ca(2+). The region spanning 83-117 is the EF-hand 2; degenerate domain; it reads KTHLEMKKMISEVTGGVSDTISYRDFVNMMLGKRS. The segment at 129–150 is disordered; it reads KANESSPKPAGPPPERDIASLP. Position 134 is a phosphoserine (S134).

As to quaternary structure, homodimer (Potential). Monomer.

It is found in the cytoplasm. The protein resides in the cytoskeleton. Its subcellular location is the cell projection. The protein localises to the ruffle membrane. In terms of biological role, actin-binding protein that promotes actin bundling. May neither bind calcium nor depend on calcium for function. This chain is Allograft inflammatory factor 1-like (Aif1l), found in Mus musculus (Mouse).